The sequence spans 60 residues: Cytochrome c oxidase subunit 7, mitochondrial (60 aa).

The Mitochondrial matrix segment spans residues 2–29 (ANKVIQLQKIFQSSTKPLWWRHPRSALY). The chain crosses the membrane as a helical span at residues 30-53 (LYPFYAIFAVAVVTPLLYIPNAIR). The Mitochondrial intermembrane segment spans residues 54–60 (GIKAKKA).

Belongs to the cytochrome c oxidase VIIa family. Component of the cytochrome c oxidase (complex IV, CIV), a multisubunit enzyme composed of 12 subunits. The complex is composed of a catalytic core of 3 subunits COX1, COX2 and COX3, encoded in the mitochondrial DNA, and 9 supernumerary subunits COX4, COX5A (or COX5B), COX6, COX7, COX8, COX9, COX12, COX13 and COX26, which are encoded in the nuclear genome. The complex exists as a monomer or a dimer and forms supercomplexes (SCs) in the inner mitochondrial membrane with a dimer of ubiquinol-cytochrome c oxidoreductase (cytochrome b-c1 complex, complex III, CIII), resulting in 2 different assemblies (supercomplexes III(2)IV and III(2)IV(2)).

It is found in the mitochondrion inner membrane. It participates in energy metabolism; oxidative phosphorylation. In terms of biological role, component of the cytochrome c oxidase, the last enzyme in the mitochondrial electron transport chain which drives oxidative phosphorylation. The respiratory chain contains 3 multisubunit complexes succinate dehydrogenase (complex II, CII), ubiquinol-cytochrome c oxidoreductase (cytochrome b-c1 complex, complex III, CIII) and cytochrome c oxidase (complex IV, CIV), that cooperate to transfer electrons derived from NADH and succinate to molecular oxygen, creating an electrochemical gradient over the inner membrane that drives transmembrane transport and the ATP synthase. Cytochrome c oxidase is the component of the respiratory chain that catalyzes the reduction of oxygen to water. Electrons originating from reduced cytochrome c in the intermembrane space (IMS) are transferred via the dinuclear copper A center (CU(A)) of COX2 and heme A of COX1 to the active site in COX1, a binuclear center (BNC) formed by heme A3 and copper B (CU(B)). The BNC reduces molecular oxygen to 2 water molecules using 4 electrons from cytochrome c in the IMS and 4 protons from the mitochondrial matrix. This Saccharomyces cerevisiae (strain ATCC 204508 / S288c) (Baker's yeast) protein is Cytochrome c oxidase subunit 7, mitochondrial (COX7).